We begin with the raw amino-acid sequence, 388 residues long: Leucine aminopeptidase 1 (388 aa).

Positions 1-19 (MRSSVLFSLYAATLVAAVA) are cleaved as a signal peptide. Residues 20–88 (HPKDPQIVLQ…TLNHKLSTES (69 aa)) constitute a propeptide that is removed on maturation. The N-linked (GlcNAc...) asparagine glycan is linked to Asn98. Zn(2+) is bound by residues His187, Asp206, Glu245, and Asp272. Cys321 and Cys325 form a disulfide bridge. A Zn(2+)-binding site is contributed by His354.

This sequence belongs to the peptidase M28 family. M28E subfamily. Monomer. Zn(2+) is required as a cofactor.

It localises to the secreted. Extracellular aminopeptidase that allows assimilation of proteinaceous substrates. The sequence is that of Leucine aminopeptidase 1 (LAP1) from Leptosphaeria maculans (strain JN3 / isolate v23.1.3 / race Av1-4-5-6-7-8) (Blackleg fungus).